The sequence spans 709 residues: Protein IMPAIRED IN BABA-INDUCED STERILITY 1 (709 aa).

The N-myristoyl glycine moiety is linked to residue Gly-2. The segment at 53–80 (SGKKSSSKKSGSELGSDFGELSESGRAS) is disordered. Residues 131–418 (FEKLEKIGQG…ASTALVSQYF (288 aa)) enclose the Protein kinase domain. ATP is bound by residues 137-145 (IGQGTYSSV) and Lys-160. Residue Asp-255 is the Proton acceptor of the active site. Disordered stretches follow at residues 434-536 (SPSK…PFSG) and 566-609 (SRGH…QDRE). Residues 437–449 (KEIDAKHREDTTR) show a composition bias toward basic and acidic residues. Basic residues predominate over residues 484–494 (HSQKFQKRNGH). Residues 495–505 (SVHNSIDSDST) show a composition bias toward polar residues. Composition is skewed to basic and acidic residues over residues 509–523 (KMQK…EASH) and 586–609 (VDSK…QDRE).

The protein belongs to the protein kinase superfamily. Ser/Thr protein kinase family.

Required for beta-aminobutyric acid (BABA)-induced resistance (BABA-IR) against bacteria (e.g. P.syringae) and oomycetes (e.g. H.parasitica) via priming for salicylate (SA)-dependent defense responses such as pathogenesis-related PR-1 gene expression and trailing necrosis. Involved in BABA-mediated sterility. Necessary for the inheritance of BABA-priming to next generation, especially for the primed to be primed phenotype which consists in an enhanced second BABA-priming in transgenerationally primed plants. In Arabidopsis thaliana (Mouse-ear cress), this protein is Protein IMPAIRED IN BABA-INDUCED STERILITY 1.